Here is a 201-residue protein sequence, read N- to C-terminus: Peroxiredoxin 2 (201 aa).

Positions valine 3–alanine 156 constitute a Thioredoxin domain. Residue cysteine 44 is the Cysteine sulfenic acid (-SOH) intermediate of the active site. A substrate-binding site is contributed by arginine 119.

It belongs to the peroxiredoxin family. Prx6 subfamily. In terms of assembly, homodecamer. Pentamer of dimers that assemble into a ring structure.

Its subcellular location is the cytoplasm. It catalyses the reaction a hydroperoxide + [thioredoxin]-dithiol = an alcohol + [thioredoxin]-disulfide + H2O. Functionally, thiol-specific peroxidase that catalyzes the reduction of hydrogen peroxide and organic hydroperoxides to water and alcohols, respectively. Plays a role in cell protection against oxidative stress by detoxifying peroxides. In Picrophilus torridus (strain ATCC 700027 / DSM 9790 / JCM 10055 / NBRC 100828 / KAW 2/3), this protein is Peroxiredoxin 2.